We begin with the raw amino-acid sequence, 475 residues long: ATP synthase subunit beta (475 aa).

ATP is bound at residue 154-161 (GGAGVGKT).

Belongs to the ATPase alpha/beta chains family. In terms of assembly, F-type ATPases have 2 components, CF(1) - the catalytic core - and CF(0) - the membrane proton channel. CF(1) has five subunits: alpha(3), beta(3), gamma(1), delta(1), epsilon(1). CF(0) has three main subunits: a(1), b(2) and c(9-12). The alpha and beta chains form an alternating ring which encloses part of the gamma chain. CF(1) is attached to CF(0) by a central stalk formed by the gamma and epsilon chains, while a peripheral stalk is formed by the delta and b chains.

Its subcellular location is the cell inner membrane. It catalyses the reaction ATP + H2O + 4 H(+)(in) = ADP + phosphate + 5 H(+)(out). Functionally, produces ATP from ADP in the presence of a proton gradient across the membrane. The catalytic sites are hosted primarily by the beta subunits. The polypeptide is ATP synthase subunit beta (Hyphomonas neptunium (strain ATCC 15444)).